Here is a 533-residue protein sequence, read N- to C-terminus: Glucomannan 4-beta-mannosyltransferase 9 (533 aa).

Residues 37–57 form a helical membrane-spanning segment; sequence IVPALRLGVYICLTMSVMLFV. The active site involves aspartate 136. 2 residues coordinate substrate: aspartate 195 and aspartate 197. Residue aspartate 289 is part of the active site. Transmembrane regions (helical) follow at residues 368 to 388, 404 to 426, 483 to 503, and 510 to 530; these read LVAHIVTFIFYCVILPATVLV, VITLLNAVGTPRSLHLMVFWILF, VLELGVGMYLLFVGCYDAFFG, and YLFAQAIAFFIAGFGQIGTIV.

Belongs to the glycosyltransferase 2 family. Plant cellulose synthase-like A subfamily. As to expression, expressed in cotyledons at the base of the hypocotyls, in root elongation zone, lateral root primordia, vascular system of young leaves, abscission zone of the pedicle,.

Its subcellular location is the golgi apparatus membrane. The catalysed reaction is GDP-mannose + (glucomannan)n = GDP + (glucomannan)n+1.. Possesses glucomannan synthase and mannan synthase activities in vitro. Mannan synthase consists of a 4-beta-mannosyltransferase activity on mannan using GDP-mannose. The beta-1,4-mannan product is the backbone for galactomannan synthesis by galactomannan galactosyltransferase. Galactomannan is a noncellulosic polysaccharides of plant cell wall. Required for lateral root development. The polypeptide is Glucomannan 4-beta-mannosyltransferase 9 (Arabidopsis thaliana (Mouse-ear cress)).